Here is a 687-residue protein sequence, read N- to C-terminus: Epithelial splicing regulatory protein 1 (687 aa).

3 RRM domains span residues 226 to 303 (TIIR…KATG), 327 to 407 (VIVR…RSTA), and 446 to 526 (DCIR…QCSA).

Belongs to the ESRP family.

It is found in the nucleus. In terms of biological role, mRNA splicing factor that regulates the formation of epithelial cell-specific isoforms. Specifically regulates the expression of FGFR2-IIIb, an epithelial cell-specific isoform of fgfr2. Acts by directly binding specific sequences in mRNAs. Binds the GU-rich sequence motifs in the ISE/ISS-3, a cis-element regulatory region present in the mRNA of fgfr2. The protein is Epithelial splicing regulatory protein 1 (esrp1) of Xenopus tropicalis (Western clawed frog).